The primary structure comprises 358 residues: DNA polymerase IV (358 aa).

One can recognise a UmuC domain in the interval 4–185 (IIHIDMDCYF…LSLRKIPGVG (182 aa)). Mg(2+) contacts are provided by D8 and D103. The active site involves E104.

Belongs to the DNA polymerase type-Y family. Monomer. The cofactor is Mg(2+).

It localises to the cytoplasm. The catalysed reaction is DNA(n) + a 2'-deoxyribonucleoside 5'-triphosphate = DNA(n+1) + diphosphate. Its function is as follows. Poorly processive, error-prone DNA polymerase involved in untargeted mutagenesis. Copies undamaged DNA at stalled replication forks, which arise in vivo from mismatched or misaligned primer ends. These misaligned primers can be extended by PolIV. Exhibits no 3'-5' exonuclease (proofreading) activity. May be involved in translesional synthesis, in conjunction with the beta clamp from PolIII. The polypeptide is DNA polymerase IV (Shewanella baltica (strain OS155 / ATCC BAA-1091)).